The chain runs to 122 residues: MIAKTVAILALAGSAAAYAPTMSLSANRRELVQGAAAAAVVAPMLRPTGASAKDAQLRAPVVTIFDARGCKDHANKEYTDPKAGNAENDECCVKVQMTPIKVADDAAALVLKECLSELKGKK.

Residues aspartate 54 and arginine 68 each coordinate (2R,3E)-phycocyanobilin. Mesobiliverdin is bound by residues cysteine 70, lysine 76, glutamate 77, and cysteine 92.

This sequence belongs to the phycoerythrin family. In terms of assembly, heterotetramer of 2 different alpha chains and 2 identical beta chains which form 2 alpha-beta heterodimers within the heterotetramer. In terms of processing, contains two phycocyanobilin chromophores and one mesobiliverdin chromophore with binding mediated by both the alpha and beta subunits.

It is found in the plastid. It localises to the chloroplast thylakoid membrane. Light-harvesting photosynthetic tetrapyrrole chromophore-protein from the phycobiliprotein complex. The sequence is that of Phycocyanin PC645 alpha-2 subunit from Chroomonas sp. (strain CCMP270).